A 201-amino-acid polypeptide reads, in one-letter code: Putative pseudouridine methyltransferase (201 aa).

S-adenosyl-L-methionine is bound by residues methionine 132 and cysteine 186.

It belongs to the methyltransferase superfamily. TrmY family.

The protein localises to the cytoplasm. This chain is Putative pseudouridine methyltransferase, found in Vibrio cholerae serotype O1 (strain ATCC 39315 / El Tor Inaba N16961).